The following is a 37-amino-acid chain: Large ribosomal subunit protein bL36 (37 aa).

This sequence belongs to the bacterial ribosomal protein bL36 family.

This Salinispora arenicola (strain CNS-205) protein is Large ribosomal subunit protein bL36.